An 89-amino-acid polypeptide reads, in one-letter code: Small ribosomal subunit protein uS15 (89 aa).

It belongs to the universal ribosomal protein uS15 family. Part of the 30S ribosomal subunit. Forms a bridge to the 50S subunit in the 70S ribosome, contacting the 23S rRNA.

Functionally, one of the primary rRNA binding proteins, it binds directly to 16S rRNA where it helps nucleate assembly of the platform of the 30S subunit by binding and bridging several RNA helices of the 16S rRNA. In terms of biological role, forms an intersubunit bridge (bridge B4) with the 23S rRNA of the 50S subunit in the ribosome. The protein is Small ribosomal subunit protein uS15 of Chlamydia felis (strain Fe/C-56) (Chlamydophila felis).